The sequence spans 361 residues: Very-long-chain 3-oxoacyl-CoA reductase (361 aa).

The chain crosses the membrane as a helical span at residues 32 to 52; sequence PALILSTVGAAFLLRYTLSIF. Residues valine 79, aspartate 133, asparagine 163, arginine 198, tyrosine 236, lysine 240, valine 269, and serine 271 each contribute to the NADP(+) site. Tyrosine 236 acts as the Proton donor in catalysis. Lysine 240 serves as the catalytic Lowers pKa of active site Tyr.

Belongs to the short-chain dehydrogenases/reductases (SDR) family.

It localises to the endoplasmic reticulum membrane. The catalysed reaction is a very-long-chain (3R)-3-hydroxyacyl-CoA + NADP(+) = a very-long-chain 3-oxoacyl-CoA + NADPH + H(+). Its pathway is lipid metabolism; fatty acid biosynthesis. In terms of biological role, component of the microsomal membrane bound fatty acid elongation system, which produces the 26-carbon very long-chain fatty acids (VLCFA) from palmitate. Catalyzes the reduction of the 3-ketoacyl-CoA intermediate that is formed in each cycle of fatty acid elongation. VLCFAs serve as precursors for ceramide and sphingolipids. This Cryptococcus neoformans var. neoformans serotype D (strain B-3501A) (Filobasidiella neoformans) protein is Very-long-chain 3-oxoacyl-CoA reductase.